Consider the following 361-residue polypeptide: Chorismate synthase (361 aa).

The NADP(+) site is built by arginine 48 and arginine 54. Residues 125-127 (RSS), 238-239 (NA), glycine 278, 293-297 (KPTSS), and arginine 319 each bind FMN.

The protein belongs to the chorismate synthase family. As to quaternary structure, homotetramer. FMNH2 is required as a cofactor.

It catalyses the reaction 5-O-(1-carboxyvinyl)-3-phosphoshikimate = chorismate + phosphate. It participates in metabolic intermediate biosynthesis; chorismate biosynthesis; chorismate from D-erythrose 4-phosphate and phosphoenolpyruvate: step 7/7. In terms of biological role, catalyzes the anti-1,4-elimination of the C-3 phosphate and the C-6 proR hydrogen from 5-enolpyruvylshikimate-3-phosphate (EPSP) to yield chorismate, which is the branch point compound that serves as the starting substrate for the three terminal pathways of aromatic amino acid biosynthesis. This reaction introduces a second double bond into the aromatic ring system. This chain is Chorismate synthase, found in Vibrio vulnificus (strain YJ016).